The chain runs to 148 residues: Caltractin (148 aa).

EF-hand domains follow at residues 4 to 39 (EQKQ…LGFE), 40 to 75 (PKKE…KMGE), 77 to 112 (DSRE…LGEN), and 113 to 148 (LTDE…TSLF). The Ca(2+) site is built by Asp-17, Asp-19, Ser-21, Thr-23, Glu-28, Asp-53, Asp-55, Ser-57, Thr-59, and Glu-64. The Ca(2+) site is built by Asp-126, Asp-128, Asp-130, Glu-132, and Glu-137.

The protein belongs to the centrin family. In terms of tissue distribution, ubiquitous.

Functionally, this calcium-binding protein is found in the basal body complexes (the functional homolog of the centrosome in animal cell). In mitotic cells it is specifically associated with the poles of the mitotic spindles at the sites of the duplicated basal body complexes. The sequence is that of Caltractin from Spermatozopsis similis (Green alga).